A 1299-amino-acid polypeptide reads, in one-letter code: DNA-directed RNA polymerase subunit beta' (1299 aa).

Positions 60, 62, 75, and 78 each coordinate Zn(2+). Positions glycine 188–arginine 209 are disordered. Mg(2+) contacts are provided by aspartate 535, aspartate 537, and aspartate 539. Residues cysteine 882, cysteine 959, cysteine 966, and cysteine 969 each contribute to the Zn(2+) site.

It belongs to the RNA polymerase beta' chain family. As to quaternary structure, the RNAP catalytic core consists of 2 alpha, 1 beta, 1 beta' and 1 omega subunit. When a sigma factor is associated with the core the holoenzyme is formed, which can initiate transcription. Requires Mg(2+) as cofactor. It depends on Zn(2+) as a cofactor.

The catalysed reaction is RNA(n) + a ribonucleoside 5'-triphosphate = RNA(n+1) + diphosphate. Its function is as follows. DNA-dependent RNA polymerase catalyzes the transcription of DNA into RNA using the four ribonucleoside triphosphates as substrates. The chain is DNA-directed RNA polymerase subunit beta' from Clavibacter sepedonicus (Clavibacter michiganensis subsp. sepedonicus).